Consider the following 475-residue polypeptide: Isocitrate dehydrogenase [NADP] (475 aa).

Residue Thr-104 coordinates NADP(+). Ser-113, Asn-115, Arg-119, Arg-129, and Arg-153 together coordinate D-threo-isocitrate. Asp-362 contributes to the Mg(2+) binding site. NADP(+) contacts are provided by residues 394–400, Asn-407, Tyr-446, and Arg-450; that span reads HGTAPKH.

The protein belongs to the isocitrate and isopropylmalate dehydrogenases family. As to quaternary structure, homodimer. Mg(2+) serves as cofactor. It depends on Mn(2+) as a cofactor.

The protein resides in the cytoplasm. The catalysed reaction is D-threo-isocitrate + NADP(+) = 2-oxoglutarate + CO2 + NADPH. Inhibited non-competitively by ADP and 2-oxoglutarate, with respect to isocitrate and in a competitive manner by NADPH. In terms of biological role, catalyzes the oxidative decarboxylation of isocitrate to 2-oxoglutarate and carbon dioxide with the concomitant reduction of NADP(+). Is specific for NADP(+), cannot use NAD(+). This is Isocitrate dehydrogenase [NADP] from Synechocystis sp. (strain ATCC 27184 / PCC 6803 / Kazusa).